Here is a 173-residue protein sequence, read N- to C-terminus: Translation initiation factor IF-3 (173 aa).

It belongs to the IF-3 family. In terms of assembly, monomer.

Its subcellular location is the cytoplasm. Its function is as follows. IF-3 binds to the 30S ribosomal subunit and shifts the equilibrium between 70S ribosomes and their 50S and 30S subunits in favor of the free subunits, thus enhancing the availability of 30S subunits on which protein synthesis initiation begins. This Clostridium tetani (strain Massachusetts / E88) protein is Translation initiation factor IF-3.